The sequence spans 244 residues: uncharacterized protein (244 aa).

6 consecutive transmembrane segments (helical) span residues 5 to 27 (KFAL…LLAV), 37 to 59 (IVMV…SRFL), 87 to 106 (LVFI…FYYG), 116 to 138 (LSLF…FFVA), 159 to 181 (FWIW…VQPS), and 196 to 218 (GVFN…RMVA).

It is found in the cell membrane. This is an uncharacterized protein from Archaeoglobus fulgidus (strain ATCC 49558 / DSM 4304 / JCM 9628 / NBRC 100126 / VC-16).